A 511-amino-acid chain; its full sequence is Maturase K (511 aa).

This sequence belongs to the intron maturase 2 family. MatK subfamily.

Its subcellular location is the plastid. The protein localises to the chloroplast. Its function is as follows. Usually encoded in the trnK tRNA gene intron. Probably assists in splicing its own and other chloroplast group II introns. In Brachypodium distachyon (Purple false brome), this protein is Maturase K.